The following is a 459-amino-acid chain: DnaJ protein homolog XDJ1 (459 aa).

One can recognise a J domain in the interval 7-79 (GDRLYDVLGV…KSHYDLYGDD (73 aa)). The CR-type zinc-finger motif lies at 146-240 (GKKLKFDLKR…CAGLGLLSKK (95 aa)). CXXCXGXG motif repeat units lie at residues 159–166 (CIKCHGSG), 181–188 (CESCAGKG), 208–215 (CEKCNGKG), and 228–235 (CPDCAGLG).

The protein localises to the mitochondrion outer membrane. This Saccharomyces cerevisiae (strain ATCC 204508 / S288c) (Baker's yeast) protein is DnaJ protein homolog XDJ1 (XDJ1).